The following is a 594-amino-acid chain: DNA ligase (594 aa).

An ATP-binding site is contributed by Glu-256. Catalysis depends on Lys-258, which acts as the N6-AMP-lysine intermediate. 6 residues coordinate ATP: Arg-263, Arg-279, Glu-309, Phe-349, Arg-426, and Lys-432.

The protein belongs to the ATP-dependent DNA ligase family. Mg(2+) is required as a cofactor.

The enzyme catalyses ATP + (deoxyribonucleotide)n-3'-hydroxyl + 5'-phospho-(deoxyribonucleotide)m = (deoxyribonucleotide)n+m + AMP + diphosphate.. In terms of biological role, DNA ligase that seals nicks in double-stranded DNA during DNA replication, DNA recombination and DNA repair. The protein is DNA ligase of Ignicoccus hospitalis (strain KIN4/I / DSM 18386 / JCM 14125).